A 151-amino-acid polypeptide reads, in one-letter code: SsrA-binding protein (151 aa).

The interval 131-151 (KRESIKEKDWKRDQSRLIRQK) is disordered.

This sequence belongs to the SmpB family.

The protein resides in the cytoplasm. Its function is as follows. Required for rescue of stalled ribosomes mediated by trans-translation. Binds to transfer-messenger RNA (tmRNA), required for stable association of tmRNA with ribosomes. tmRNA and SmpB together mimic tRNA shape, replacing the anticodon stem-loop with SmpB. tmRNA is encoded by the ssrA gene; the 2 termini fold to resemble tRNA(Ala) and it encodes a 'tag peptide', a short internal open reading frame. During trans-translation Ala-aminoacylated tmRNA acts like a tRNA, entering the A-site of stalled ribosomes, displacing the stalled mRNA. The ribosome then switches to translate the ORF on the tmRNA; the nascent peptide is terminated with the 'tag peptide' encoded by the tmRNA and targeted for degradation. The ribosome is freed to recommence translation, which seems to be the essential function of trans-translation. In Rickettsia bellii (strain OSU 85-389), this protein is SsrA-binding protein.